The chain runs to 109 residues: Beta-keratin-related protein (109 aa).

N-acetylserine is present on S2.

Belongs to the avian keratin family.

This Coturnix japonica (Japanese quail) protein is Beta-keratin-related protein (BKJ).